The sequence spans 465 residues: MVSAMRSRTLSKDDVNYKMHFRMINEQQVEDITIDFFYKPHTITLLTFTTVSLMYFAFTRENTSQEDNIWKGILSVIFFFLIISVLAFPNGPFTRPHPAIWRMVFGLSVLYFLFLVFLLFLNVEQVKAVMYWLDPNLRYATRESDVMEYAVNCHVITWERILSHFDIFAFGHFWGWAMKALLIRSYGLCWTISITWEMTELFFMHLLPNFAECWWDQVILDILLCNGGGILLGMVVCRFLEMRTYHWASFKDIHTTTGKIKRAVLQFTPASWIYVRWFDPKSSFQRVAGVYLFMIIWQLTELNTFFLKHIFVFQASHPLSWCRILFIGIITAPTVRQYYAYLTDTQCKRVGTQCWVFGAIAFLEATVCIKFGQDLFSKTHLLYVFLWLFSVAVITFLCLYGMVWYADYCGQREKTFSECEDSTYNTDIPWHHIDKPVEAPVKQNEGTSRRKNRHKGKVTNGVGKK.

At 1–35 (MVSAMRSRTLSKDDVNYKMHFRMINEQQVEDITID) the chain is on the cytoplasmic side. The helical transmembrane segment at 36 to 56 (FFYKPHTITLLTFTTVSLMYF) threads the bilayer. Residues 57–68 (AFTRENTSQEDN) are Lumenal-facing. The helical transmembrane segment at 69–89 (IWKGILSVIFFFLIISVLAFP) threads the bilayer. Over 90–102 (NGPFTRPHPAIWR) the chain is Cytoplasmic. The chain crosses the membrane as a helical span at residues 103 to 123 (MVFGLSVLYFLFLVFLLFLNV). Over 124–186 (EQVKAVMYWL…AMKALLIRSY (63 aa)) the chain is Lumenal. The chain crosses the membrane as a helical span at residues 187–207 (GLCWTISITWEMTELFFMHLL). The Cytoplasmic segment spans residues 208-216 (PNFAECWWD). A helical membrane pass occupies residues 217–237 (QVILDILLCNGGGILLGMVVC). The Lumenal segment spans residues 238-286 (RFLEMRTYHWASFKDIHTTTGKIKRAVLQFTPASWIYVRWFDPKSSFQR). Residues 287-307 (VAGVYLFMIIWQLTELNTFFL) form a helical membrane-spanning segment. Over 308 to 319 (KHIFVFQASHPL) the chain is Cytoplasmic. A helical membrane pass occupies residues 320-342 (SWCRILFIGIITAPTVRQYYAYL). Topologically, residues 343–355 (TDTQCKRVGTQCW) are lumenal. The helical transmembrane segment at 356-376 (VFGAIAFLEATVCIKFGQDLF) threads the bilayer. At 377–383 (SKTHLLY) the chain is on the cytoplasmic side. Residues 384 to 404 (VFLWLFSVAVITFLCLYGMVW) form a helical membrane-spanning segment. At 405–465 (YADYCGQREK…GKVTNGVGKK (61 aa)) the chain is on the lumenal side. The disordered stretch occupies residues 440-465 (PVKQNEGTSRRKNRHKGKVTNGVGKK). A compositionally biased stretch (basic residues) spans 449–465 (RRKNRHKGKVTNGVGKK).

It belongs to the phosphatidyl serine synthase family.

It localises to the endoplasmic reticulum membrane. It catalyses the reaction a 1,2-diacyl-sn-glycero-3-phosphoethanolamine + L-serine = a 1,2-diacyl-sn-glycero-3-phospho-L-serine + ethanolamine. The enzyme catalyses a 1,2-diacyl-sn-glycero-3-phosphocholine + L-serine = a 1,2-diacyl-sn-glycero-3-phospho-L-serine + choline. It functions in the pathway phospholipid metabolism; phosphatidylserine biosynthesis. Catalyzes a base-exchange reaction in which the polar head group of phosphatidylethanolamine (PE) or phosphatidylcholine (PC) is replaced by L-serine. Catalyzes mainly the conversion of phosphatidylcholine but also converts, in vitro and to a lesser extent, phosphatidylethanolamine. The protein is Phosphatidylserine synthase 1 (ptdss1) of Xenopus tropicalis (Western clawed frog).